The sequence spans 84 residues: Small ribosomal subunit protein uS17 (84 aa).

This sequence belongs to the universal ribosomal protein uS17 family. As to quaternary structure, part of the 30S ribosomal subunit.

In terms of biological role, one of the primary rRNA binding proteins, it binds specifically to the 5'-end of 16S ribosomal RNA. This chain is Small ribosomal subunit protein uS17, found in Borreliella burgdorferi (strain ATCC 35210 / DSM 4680 / CIP 102532 / B31) (Borrelia burgdorferi).